Reading from the N-terminus, the 1001-residue chain is MAVVIRLLGLPFIAGPVDIRHFFTGLTIPDGGVHIIGGEIGEAFIIFATDEDARRAISRSGGFIKDSSVELFLSSKAEMQKTIEMKRTDRVGRGRPGSGTSGVDSLSNFIESVKEEASNSGYGSSINQDAGFHTNGTGHGNLRPRKTRPLKAENPYLFLRGLPYLVNEDDVRVFFSGLCVDGVIFLKHHDGRNNGDAIVKFASCVDASGGLKCHRSFMGSRFIEVMQGSEQQWIEFGGNAVKEGDVLRRSEEHSPPRGINDRHFRKRSHSKSPRRTRSRSPLGFYVHLKNLSLSIDERDLRNFFRGTDLTDEQIRFLYKDENRTRYAFVMFKTLKDYNTALSLHKTVLQYRPVHIDPISRKQMLKFIARYEKKRSGSLERDRPGHVSQKYSQEGNSGQKLCIYIRNFPFDVTKVEVQKFFADFLLAEDDIYLLYDDKGVGLGEALVKFKSEEQAMKAERLNRRRFLGTEVLLRLISEAQIQEFGVNFSVMSSEKMQARSQSRERGDHSHLFDSKDPPIYSVGAFENFRHQLEDLRQLDNFKHPQRDFRQPDRHPPEDFRHSSEDFRFPPEDFRHSPEDFRRPREEDFRRPSEEDFRRPWEEDFRRPPEDDFRHPREEDWRRPLEEDWRRPLEEDFRRSPTEDFRQLPEEDFRQPPEEDLRWLPEEDFRRPPEEDWRRPPEEDFRRPLQGEWRRPPEDDFRRPPEEDFRHSPEEDFRQSPQEHFRRPPQEHFRRPPPEHFRRPPPEHFRRPPPEHFRRPPPEHFRRPPPEHFRRPPPEHFRRPPQEHFRRPPQEHFRRSREEDFRHPPDEDFRGPPDEDFRHPPDEDFRSPQEEDFRCPSDEDFRQLPEEDLREAPEEDPRLPDNFRPPGEDFRSPPDDFRSHRPFVNFGRPEGGKFDFGKHNMGSFPEGRFMPDPKINCGSGRVTPIKIMNLPFKANVNEILDFFHGYRIIPDSVSIQYNEQGLPTGEAIVAMINYNEAMAAIKDLNDRPVGPRKVKLTLL.

Ser-98, Ser-101, and Ser-112 each carry phosphoserine. Lys-114 is covalently cross-linked (Glycyl lysine isopeptide (Lys-Gly) (interchain with G-Cter in SUMO2)). Positions 119-128 (NSGYGSSINQ) are enriched in polar residues. The tract at residues 119-147 (NSGYGSSINQDAGFHTNGTGHGNLRPRKT) is disordered. Lys-151 participates in a covalent cross-link: Glycyl lysine isopeptide (Lys-Gly) (interchain with G-Cter in SUMO2). Positions 155 to 230 (PYLFLRGLPY…RFIEVMQGSE (76 aa)) constitute an RRM 1 domain. A compositionally biased stretch (basic and acidic residues) spans 247–262 (LRRSEEHSPPRGINDR). Positions 247–278 (LRRSEEHSPPRGINDRHFRKRSHSKSPRRTRS) are disordered. A phosphoserine mark is found at Ser-250 and Ser-254. Positions 263 to 278 (HFRKRSHSKSPRRTRS) are enriched in basic residues. Thr-276 carries the post-translational modification Phosphothreonine. Phosphoserine is present on residues Ser-278, Ser-280, Ser-292, and Ser-294. The region spanning 284-360 (FYVHLKNLSL…RPVHIDPISR (77 aa)) is the RRM 2 domain. Position 319 is an N6-acetyllysine (Lys-319). A Glycyl lysine isopeptide (Lys-Gly) (interchain with G-Cter in SUMO2) cross-link involves residue Lys-335. Ser-377 bears the Phosphoserine mark. An RRM 3 domain is found at 400–477 (LCIYIRNFPF…TEVLLRLISE (78 aa)). Glycyl lysine isopeptide (Lys-Gly) (interchain with G-Cter in SUMO2) cross-links involve residues Lys-514 and Lys-541. The disordered stretch occupies residues 544–587 (QRDFRQPDRHPPEDFRHSSEDFRFPPEDFRHSPEDFRRPREEDF). Phosphoserine is present on residues Ser-575, Ser-591, and Ser-638. A compositionally biased stretch (basic and acidic residues) spans 631–881 (LEEDFRRSPT…FRSPPDDFRS (251 aa)). The disordered stretch occupies residues 631-882 (LEEDFRRSPT…RSPPDDFRSH (252 aa)). Thr-640 is modified (phosphothreonine). Ser-710 and Ser-718 each carry phosphoserine. Lys-895 participates in a covalent cross-link: Glycyl lysine isopeptide (Lys-Gly) (interchain with G-Cter in SUMO2). An RRM 4 domain is found at 925–1001 (TPIKIMNLPF…GPRKVKLTLL (77 aa)).

The chain is RNA-binding protein 12B (RBM12B) from Homo sapiens (Human).